The primary structure comprises 198 residues: Peptidyl-tRNA hydrolase (198 aa).

A tRNA-binding site is contributed by tyrosine 15. The active-site Proton acceptor is the histidine 20. TRNA contacts are provided by phenylalanine 66, asparagine 68, and asparagine 114.

The protein belongs to the PTH family. As to quaternary structure, monomer.

Its subcellular location is the cytoplasm. It catalyses the reaction an N-acyl-L-alpha-aminoacyl-tRNA + H2O = an N-acyl-L-amino acid + a tRNA + H(+). Its function is as follows. Hydrolyzes ribosome-free peptidyl-tRNAs (with 1 or more amino acids incorporated), which drop off the ribosome during protein synthesis, or as a result of ribosome stalling. In terms of biological role, catalyzes the release of premature peptidyl moieties from peptidyl-tRNA molecules trapped in stalled 50S ribosomal subunits, and thus maintains levels of free tRNAs and 50S ribosomes. The chain is Peptidyl-tRNA hydrolase from Cupriavidus metallidurans (strain ATCC 43123 / DSM 2839 / NBRC 102507 / CH34) (Ralstonia metallidurans).